The following is a 68-amino-acid chain: Gene 42 protein (68 aa).

In Mycobacterium phage D29 (Mycobacteriophage D29), this protein is Gene 42 protein (42).